A 344-amino-acid polypeptide reads, in one-letter code: tRNA-specific 2-thiouridylase MnmA (344 aa).

ATP is bound by residues 9–16 (AMSGGVDS) and methionine 34. The active-site Nucleophile is cysteine 92. A disulfide bridge connects residues cysteine 92 and cysteine 188. Glycine 116 contributes to the ATP binding site. The interval 138–140 (KDQ) is interaction with tRNA. The active-site Cysteine persulfide intermediate is the cysteine 188.

It belongs to the MnmA/TRMU family.

It is found in the cytoplasm. The enzyme catalyses S-sulfanyl-L-cysteinyl-[protein] + uridine(34) in tRNA + AH2 + ATP = 2-thiouridine(34) in tRNA + L-cysteinyl-[protein] + A + AMP + diphosphate + H(+). Catalyzes the 2-thiolation of uridine at the wobble position (U34) of tRNA, leading to the formation of s(2)U34. This Desulfotalea psychrophila (strain LSv54 / DSM 12343) protein is tRNA-specific 2-thiouridylase MnmA.